We begin with the raw amino-acid sequence, 465 residues long: Putative multidrug resistance protein MdtD (465 aa).

The next 13 membrane-spanning stretches (helical) occupy residues 12 to 32, 49 to 69, 72 to 92, 102 to 124, 138 to 158, 165 to 185, 195 to 215, 219 to 239, 267 to 287, 290 to 310, 342 to 362, 393 to 413, and 430 to 450; these read LWIV…VNTA, SVIV…GWLA, IGVK…SLMC, ILSR…LTVM, FVTL…GFLV, WIFL…LLLM, FDIS…LALD, GLGL…IALG, LVGS…TPIF, IGLG…IIGS, LSLP…VLFF, LLSM…GILL, and SAFL…ALIF.

Belongs to the major facilitator superfamily. TCR/Tet family.

It is found in the cell inner membrane. This Yersinia pseudotuberculosis serotype O:1b (strain IP 31758) protein is Putative multidrug resistance protein MdtD.